We begin with the raw amino-acid sequence, 242 residues long: Small ribosomal subunit protein uS2 (242 aa).

The protein belongs to the universal ribosomal protein uS2 family.

The sequence is that of Small ribosomal subunit protein uS2 from Shewanella loihica (strain ATCC BAA-1088 / PV-4).